The chain runs to 96 residues: Co-chaperonin GroES (96 aa).

The protein belongs to the GroES chaperonin family. In terms of assembly, heptamer of 7 subunits arranged in a ring. Interacts with the chaperonin GroEL.

The protein localises to the cytoplasm. Together with the chaperonin GroEL, plays an essential role in assisting protein folding. The GroEL-GroES system forms a nano-cage that allows encapsulation of the non-native substrate proteins and provides a physical environment optimized to promote and accelerate protein folding. GroES binds to the apical surface of the GroEL ring, thereby capping the opening of the GroEL channel. This chain is Co-chaperonin GroES, found in Thioalkalivibrio sulfidiphilus (strain HL-EbGR7).